Here is a 717-residue protein sequence, read N- to C-terminus: MNSPEKSAACDIYDPKSIPDYDREFIDPDDLRQFENALNDNESNSLVALNDWRPIYQRVRKNRGRRKKPRRTTDETREGVLYTVLKWPFLFIVFGWITVLGFAYALTRFYIVLYERWVSWRGKKESLRRELWKQTDYNNWLKAAQALDNHLGNQQWKEIDEYAYYDHLTINKLVNQLRKARTDVELQMRNGVSSSTVIPATEELCALLEGCVKNNFAGVENPRLYSETYSGTKNLVQEYIDEVEKCIQVVSNNKWVSNEDKYHHFKHLDTNFGRTALCLSGGATFAYYHFGVARALLDNGVLPEIITGTSGGALVAALIATRTDEELKQLLVPALAHRIRASSEGMASWIWRWWRTGARFDTITWARECSWFCRGSTTFKEAYERTGRILNVSCVPSDPHSPTILANYLTSPNCVIWSAVLASAAVPGILNPVVLMTKKRDGTLAPYSFGHKWKDGSLRTDIPIRALNLHFNVNFPIVSQVNPHINLFFFSSRGSVGRPVTHRRGRGWRGGFLGSAIEQYIKLDLNKWLRVLRHLELLPRPLGQDWSEIWLQKFSGTITIWPKTIPSDFYYILSDPTPERLARMLNVGQQSAFPMIQFIKNRLKIENAILKGLHQYSPAVSPAQSRRKRGHAGKPSDPMVERLDHNLPDRQPDNKEDLSDSSGIDSNVSSRDSCLQPSSNRRNRRRSTGNIFQEMRRQSAVFFDDSDLYAEDDKKVE.

The chain crosses the membrane as a helical span at residues 87-107 (WPFLFIVFGWITVLGFAYALT). Residues 277–468 (LCLSGGATFA…RTDIPIRALN (192 aa)) form the PNPLA domain. Residues 308–312 (GTSGG) carry the GXSXG motif. The active-site Nucleophile is S310. The active-site Proton acceptor is D455. The disordered stretch occupies residues 620–696 (VSPAQSRRKR…STGNIFQEMR (77 aa)). Basic and acidic residues predominate over residues 639 to 658 (MVERLDHNLPDRQPDNKEDL). The span at 660–673 (DSSGIDSNVSSRDS) shows a compositional bias: low complexity.

The protein belongs to the PLPL family.

It is found in the membrane. Probable lipid hydrolase. This is Patatin-like phospholipase domain-containing protein AO090003000839 from Aspergillus oryzae (strain ATCC 42149 / RIB 40) (Yellow koji mold).